Reading from the N-terminus, the 656-residue chain is Hemocyanin subunit A (656 aa).

The N-terminal stretch at 1–18 is a signal peptide; it reads MWSLALATLFVLGTVIRA. Residues histidine 197, histidine 201, and histidine 227 each coordinate Cu cation. The N-linked (GlcNAc...) asparagine glycan is linked to asparagine 313. Cu cation-binding residues include histidine 348, histidine 352, and histidine 388. An intrachain disulfide couples cysteine 558 to cysteine 606.

This sequence belongs to the tyrosinase family. Hemocyanin subfamily. As to quaternary structure, 36-chain polymer consisting of 6 hexamers, each of which includes 4 different chains, A, B, C and D. As to expression, hemolymph.

The protein resides in the secreted. The protein localises to the extracellular space. Functionally, hemocyanins are copper-containing oxygen carriers occurring freely dissolved in the hemolymph of many mollusks and arthropods. This is Hemocyanin subunit A (HCA) from Scutigera coleoptrata (House centipede).